The following is a 203-amino-acid chain: LexA repressor (203 aa).

Positions isoleucine 28–lysine 47 form a DNA-binding region, H-T-H motif. Residues serine 127 and lysine 164 each act as for autocatalytic cleavage activity in the active site.

The protein belongs to the peptidase S24 family. As to quaternary structure, homodimer.

It catalyses the reaction Hydrolysis of Ala-|-Gly bond in repressor LexA.. In terms of biological role, represses a number of genes involved in the response to DNA damage (SOS response), including recA and lexA. In the presence of single-stranded DNA, RecA interacts with LexA causing an autocatalytic cleavage which disrupts the DNA-binding part of LexA, leading to derepression of the SOS regulon and eventually DNA repair. The sequence is that of LexA repressor from Leptospira interrogans serogroup Icterohaemorrhagiae serovar copenhageni (strain Fiocruz L1-130).